The sequence spans 77 residues: Conotoxin Vc1 (77 aa).

The N-terminal stretch at 1-22 is a signal peptide; it reads MRTSGRLLLLCLAVGLLLESQA. Propeptides lie at residues 23-58 and 73-77; these read HPNA…KGQR and RRSFY.

Belongs to the conotoxin H superfamily. In terms of tissue distribution, expressed by the venom duct.

It is found in the secreted. In terms of biological role, probable toxin. This is Conotoxin Vc1 from Conus victoriae (Queen Victoria cone).